Reading from the N-terminus, the 1029-residue chain is 2-oxoglutarate dehydrogenase, mitochondrial (1029 aa).

Positions 317, 415, 448, 450, and 676 each coordinate thiamine diphosphate. Asp-415, Asn-448, and Ile-450 together coordinate Mg(2+).

The protein belongs to the alpha-ketoglutarate dehydrogenase family. As to quaternary structure, homodimer. Component of the 2-oxoglutarate dehydrogenase complex. Requires thiamine diphosphate as cofactor. The cofactor is Mg(2+).

It localises to the mitochondrion matrix. The catalysed reaction is N(6)-[(R)-lipoyl]-L-lysyl-[protein] + 2-oxoglutarate + H(+) = N(6)-[(R)-S(8)-succinyldihydrolipoyl]-L-lysyl-[protein] + CO2. The 2-oxoglutarate dehydrogenase complex catalyzes the overall conversion of 2-oxoglutarate to succinyl-CoA and CO(2). It contains multiple copies of three enzymatic components: 2-oxoglutarate dehydrogenase (E1), dihydrolipoamide succinyltransferase (E2) and lipoamide dehydrogenase (E3). The sequence is that of 2-oxoglutarate dehydrogenase, mitochondrial (ogdh-1) from Caenorhabditis elegans.